The chain runs to 937 residues: Glycine dehydrogenase (decarboxylating) (937 aa).

K686 carries the N6-(pyridoxal phosphate)lysine modification.

Belongs to the GcvP family. In terms of assembly, the glycine cleavage system is composed of four proteins: P, T, L and H. Requires pyridoxal 5'-phosphate as cofactor.

The catalysed reaction is N(6)-[(R)-lipoyl]-L-lysyl-[glycine-cleavage complex H protein] + glycine + H(+) = N(6)-[(R)-S(8)-aminomethyldihydrolipoyl]-L-lysyl-[glycine-cleavage complex H protein] + CO2. In terms of biological role, the glycine cleavage system catalyzes the degradation of glycine. The P protein binds the alpha-amino group of glycine through its pyridoxal phosphate cofactor; CO(2) is released and the remaining methylamine moiety is then transferred to the lipoamide cofactor of the H protein. This Mesorhizobium japonicum (strain LMG 29417 / CECT 9101 / MAFF 303099) (Mesorhizobium loti (strain MAFF 303099)) protein is Glycine dehydrogenase (decarboxylating).